Consider the following 364-residue polypeptide: Aminomethyltransferase (364 aa).

This sequence belongs to the GcvT family. In terms of assembly, the glycine cleavage system is composed of four proteins: P, T, L and H.

The catalysed reaction is N(6)-[(R)-S(8)-aminomethyldihydrolipoyl]-L-lysyl-[protein] + (6S)-5,6,7,8-tetrahydrofolate = N(6)-[(R)-dihydrolipoyl]-L-lysyl-[protein] + (6R)-5,10-methylene-5,6,7,8-tetrahydrofolate + NH4(+). Its function is as follows. The glycine cleavage system catalyzes the degradation of glycine. In Shigella dysenteriae serotype 1 (strain Sd197), this protein is Aminomethyltransferase.